A 679-amino-acid polypeptide reads, in one-letter code: MTKNLLVELGLEEMPAYVVKPSIKQLRQKMGQFLETNRLSFEKIEMFSTPRRLAIRVVHLADQQSDYSEDFKGPAKKIALDADGHFTKAAQGFVRGKGLTTDAIEFREVKGEEYVYVTKNEAGKPAKEVLGGLIDVLQSLTFPVNMHWANHTFEYIRPVHTLVVLLDDEALDLNFLDIKSGRISRGHRFLGQETQIASAASYETDLRAEFVIADAKEREDMIIEQIREIEKTYNVSVEIDEALLSEVLNLVEYPTAFMGSFDEKYLELPEEVLVTSMKTHQRYFVVRDQTGKLLPNFISVRNGNEQFIENVVKGNEKVLLARLEDGEFFWREDQRLQIADLVEKLKLVTFHEKIGSLYEHMMRTKQIAAYLAEQADLTDQEKAEIERAASIYKFDLLTGMVGEFDELQGIMGEKYATLAGESQAVATAVREHYLPISSDGQLPDSKVGAILAVADKLDTLLSFFSVGLIPSGSNDPYALRRATQGIVRILDKFGWEIPLDRLVANLYQFDFDSLTYQNQADVLAFIRGRVEKMIDKSVPKDIREAVLDSSTHIVRLEVEAAAALAEKADEDHFKASIESLSRVFNLAEKSNHNEMVDTSIFENEYEQELFDAVEELHFTEDMTDNVDRLFVLSPIIDAFFDNTMVMVDDEAVKKNRLNLLDRLAQKANTIAAFNEIRTK.

The protein belongs to the class-II aminoacyl-tRNA synthetase family. As to quaternary structure, tetramer of two alpha and two beta subunits.

The protein localises to the cytoplasm. It catalyses the reaction tRNA(Gly) + glycine + ATP = glycyl-tRNA(Gly) + AMP + diphosphate. The protein is Glycine--tRNA ligase beta subunit of Streptococcus mutans serotype c (strain ATCC 700610 / UA159).